A 102-amino-acid chain; its full sequence is Protein iss (102 aa).

Functionally, increases serum survival and confers group II surface exclusion. This is Protein iss (iss) from Escherichia coli.